A 701-amino-acid chain; its full sequence is DNA-directed RNA polymerase subunit beta' (701 aa).

Positions 76, 78, 94, and 97 each coordinate Zn(2+). 3 residues coordinate Mg(2+): Asp-511, Asp-513, and Asp-515.

It belongs to the RNA polymerase beta' chain family. RpoC1 subfamily. In plastids the minimal PEP RNA polymerase catalytic core is composed of four subunits: alpha, beta, beta', and beta''. When a (nuclear-encoded) sigma factor is associated with the core the holoenzyme is formed, which can initiate transcription. Requires Mg(2+) as cofactor. Zn(2+) is required as a cofactor.

The protein resides in the plastid. It localises to the chloroplast. The catalysed reaction is RNA(n) + a ribonucleoside 5'-triphosphate = RNA(n+1) + diphosphate. Functionally, DNA-dependent RNA polymerase catalyzes the transcription of DNA into RNA using the four ribonucleoside triphosphates as substrates. This is DNA-directed RNA polymerase subunit beta' from Pelargonium hortorum (Common geranium).